A 165-amino-acid chain; its full sequence is UPF0303 protein Bxeno_A1932 (165 aa).

The protein belongs to the UPF0303 family.

This chain is UPF0303 protein Bxeno_A1932, found in Paraburkholderia xenovorans (strain LB400).